Consider the following 81-residue polypeptide: Acyl carrier protein (81 aa).

Residues 1–79 form the Carrier domain; that stretch reads MDREEILQKI…EAVDYVVEHQ (79 aa). Ser39 is modified (O-(pantetheine 4'-phosphoryl)serine).

Belongs to the acyl carrier protein (ACP) family. 4'-phosphopantetheine is transferred from CoA to a specific serine of apo-ACP by AcpS. This modification is essential for activity because fatty acids are bound in thioester linkage to the sulfhydryl of the prosthetic group.

It localises to the cytoplasm. Its pathway is lipid metabolism; fatty acid biosynthesis. Carrier of the growing fatty acid chain in fatty acid biosynthesis. This Rubrobacter xylanophilus (strain DSM 9941 / JCM 11954 / NBRC 16129 / PRD-1) protein is Acyl carrier protein.